We begin with the raw amino-acid sequence, 161 residues long: Peptidyl-prolyl cis-trans isomerase-like 1 (161 aa).

The PPIase cyclophilin-type domain occupies 1–155 (MATDVVFDTS…DEVKIIRAKV (155 aa)).

Belongs to the cyclophilin-type PPIase family. PPIL1 subfamily.

It carries out the reaction [protein]-peptidylproline (omega=180) = [protein]-peptidylproline (omega=0). Functionally, PPIases accelerate the folding of proteins. It catalyzes the cis-trans isomerization of proline imidic peptide bonds in oligopeptides. The sequence is that of Peptidyl-prolyl cis-trans isomerase-like 1 (cyp1) from Aspergillus fumigatus (strain ATCC MYA-4609 / CBS 101355 / FGSC A1100 / Af293) (Neosartorya fumigata).